A 328-amino-acid chain; its full sequence is Alanine racemase (328 aa).

Catalysis depends on Lys-33, which acts as the Proton acceptor; specific for D-alanine. Lys-33 is modified (N6-(pyridoxal phosphate)lysine). Arg-118 contacts substrate. Tyr-237 functions as the Proton acceptor; specific for L-alanine in the catalytic mechanism. Met-283 provides a ligand contact to substrate.

The protein belongs to the alanine racemase family. It depends on pyridoxal 5'-phosphate as a cofactor.

The catalysed reaction is L-alanine = D-alanine. The protein operates within amino-acid biosynthesis; D-alanine biosynthesis; D-alanine from L-alanine: step 1/1. Its function is as follows. Catalyzes the interconversion of L-alanine and D-alanine. May also act on other amino acids. This is Alanine racemase (alr) from Campylobacter jejuni subsp. jejuni serotype O:2 (strain ATCC 700819 / NCTC 11168).